The primary structure comprises 409 residues: Phosphatidylserine decarboxylase proenzyme, mitochondrial (409 aa).

The transit peptide at 1–52 (MATSVGHRCLGLLHGVAPWRSSLHPCEITALSQSLQPLRKLPFRAFRTDARK) directs the protein to the mitochondrion. The Mitochondrial matrix segment spans residues 53-63 (IHTAPARTMFL). The chain crosses the membrane as a helical span at residues 64-82 (LRPVPILLATGGGYAGYRQ). Topologically, residues 83 to 409 (YEKYRERELE…IRFGEALGSL (327 aa)) are mitochondrial intermembrane. Residues D191, H267, and S378 each act as charge relay system; for autoendoproteolytic cleavage activity in the active site. S378 (schiff-base intermediate with substrate; via pyruvic acid; for decarboxylase activity) is an active-site residue. S378 carries the post-translational modification Pyruvic acid (Ser); by autocatalysis.

Belongs to the phosphatidylserine decarboxylase family. PSD-B subfamily. Eukaryotic type I sub-subfamily. Heterodimer of a large membrane-associated beta subunit and a small pyruvoyl-containing alpha subunit. The cofactor is pyruvate. Post-translationally, is synthesized initially as an inactive proenzyme. Formation of the active enzyme involves a self-maturation process in which the active site pyruvoyl group is generated from an internal serine residue via an autocatalytic post-translational modification. Two non-identical subunits are generated from the proenzyme in this reaction, and the pyruvate is formed at the N-terminus of the alpha chain, which is derived from the carboxyl end of the proenzyme. The autoendoproteolytic cleavage occurs by a canonical serine protease mechanism, in which the side chain hydroxyl group of the serine supplies its oxygen atom to form the C-terminus of the beta chain, while the remainder of the serine residue undergoes an oxidative deamination to produce ammonia and the pyruvoyl prosthetic group on the alpha chain. During this reaction, the Ser that is part of the protease active site of the proenzyme becomes the pyruvoyl prosthetic group, which constitutes an essential element of the active site of the mature decarboxylase.

The protein resides in the mitochondrion inner membrane. The protein localises to the lipid droplet. It localises to the cytoplasm. The enzyme catalyses a 1,2-diacyl-sn-glycero-3-phospho-L-serine + H(+) = a 1,2-diacyl-sn-glycero-3-phosphoethanolamine + CO2. The protein operates within phospholipid metabolism; phosphatidylethanolamine biosynthesis. Functionally, catalyzes the formation of phosphatidylethanolamine (PtdEtn) from phosphatidylserine (PtdSer). Plays a central role in phospholipid metabolism and in the interorganelle trafficking of phosphatidylserine. May be involved in lipid droplet biogenesis at the endoplasmic reticulum membrane. The sequence is that of Phosphatidylserine decarboxylase proenzyme, mitochondrial from Pongo abelii (Sumatran orangutan).